Here is a 429-residue protein sequence, read N- to C-terminus: MANIVVVGTQWGDEGKGKIVDLLAAFADLVVRFQGGNNAGHTLVVNGESFISHLVPSGILQGKMCLIGNGVVVDPAVLTEEMAALRSRGVAVIPEKFKVSASAHIIMPYHKTIDLVREEAKGHEKIGTTGRGIGPCYEDKVGRNGLRFVDMLDLPAFREKMARQVKEKNLYLERMFGAAPLDVDGAVAEYVGYAETLAPYIADVSRILADASDEGRQVLFEGAQGTYLDIDHGTYPYVTSSNTVAGNACCGSGIGPRDLSGVLGIVKAYTTRVGEGPFPTELFDDVGDFMQRTGSEFGATTGRKRRCGWLDAVMLKSAARLNGLTGLAITKLDVLTGLDTLEICTAYRYQGKTLSDFPADVKTLSQCEPVYEAVQGWQEDISGVRSAADLPDAARRYLDRITELVGVRVDIVSVGAGRDQTVVINNPFA.

GTP-binding positions include 12–18 (GDEGKGK) and 40–42 (GHT). Asp-13 (proton acceptor) is an active-site residue. Residues Asp-13 and Gly-40 each coordinate Mg(2+). IMP-binding positions include 13 to 16 (DEGK), 38 to 41 (NAGH), Thr-129, Arg-143, Gln-224, Thr-239, and Arg-303. His-41 acts as the Proton donor in catalysis. Position 299 to 305 (299 to 305 (ATTGRKR)) interacts with substrate. GTP contacts are provided by residues Arg-305, 331–333 (KLD), and 413–415 (SVG).

The protein belongs to the adenylosuccinate synthetase family. Homodimer. Requires Mg(2+) as cofactor.

Its subcellular location is the cytoplasm. It carries out the reaction IMP + L-aspartate + GTP = N(6)-(1,2-dicarboxyethyl)-AMP + GDP + phosphate + 2 H(+). The protein operates within purine metabolism; AMP biosynthesis via de novo pathway; AMP from IMP: step 1/2. Functionally, plays an important role in the de novo pathway of purine nucleotide biosynthesis. Catalyzes the first committed step in the biosynthesis of AMP from IMP. The sequence is that of Adenylosuccinate synthetase from Desulfosudis oleivorans (strain DSM 6200 / JCM 39069 / Hxd3) (Desulfococcus oleovorans).